Consider the following 331-residue polypeptide: MSEILLLLHPTVVTEESLVESAKSGLSGKFPEASLTQHIIDRIANDMVELPSSHFDHIHYVNPNKSHLSIPPSVMAKLFASLKNGGELSGDLPKDQDLDVLMNGFIVKDDGSWSKPAPVSTVLLRKKKPAETAARKMPTFKKPVSSPVTLTDTSANNTDAEDDLSMKRKLDSTKLAYFSDDSSGEEDDLIDENELIADSHKFNVNIVVPKKCELPNGKKRKKACKDCTCGLKELEEQEEQATRNLQDTLLGKMAQSATLEAIKIEERLKKSQVQFSAQDLTEIDFTVEGKTGGCSSCALGDAFRCDGCPYLGLPPFKPGEVVTLDSFGEDI.

The interval 1 to 146 (MSEILLLLHP…MPTFKKPVSS (146 aa)) is N-terminal SAM-like domain. The interval 142-164 (KPVSSPVTLTDTSANNTDAEDDL) is disordered. Positions 146-158 (SPVTLTDTSANNT) are enriched in polar residues. The linker stretch occupies residues 147–202 (PVTLTDTSANNTDAEDDLSMKRKLDSTKLAYFSDDSSGEEDDLIDENELIADSHKF). [2Fe-2S] cluster is bound by residues Cys-212, Cys-224, Cys-227, and Cys-229. Residues 212-229 (CELPNGKKRKKACKDCTC) are fe-S binding site A. The [4Fe-4S] cluster site is built by Cys-294, Cys-297, Cys-305, and Cys-308. 2 consecutive short sequence motifs (cx2C motif) follow at residues 294–297 (CSSC) and 305–308 (CDGC). Residues 294–308 (CSSCALGDAFRCDGC) are fe-S binding site B.

The protein belongs to the anamorsin family. In terms of assembly, monomer. Interacts with TAH18. Interacts with MIA40. [2Fe-2S] cluster serves as cofactor. It depends on [4Fe-4S] cluster as a cofactor.

It is found in the cytoplasm. Its subcellular location is the mitochondrion intermembrane space. Component of the cytosolic iron-sulfur (Fe-S) protein assembly (CIA) machinery required for the maturation of extramitochondrial Fe-S proteins. Part of an electron transfer chain functioning in an early step of cytosolic Fe-S biogenesis, facilitating the de novo assembly of a [4Fe-4S] cluster on the scaffold complex CFD1-NBP35. Electrons are transferred to DRE2 from NADPH via the FAD- and FMN-containing protein TAH18. TAH18-DRE2 are also required for the assembly of the diferric tyrosyl radical cofactor of ribonucleotide reductase (RNR), probably by providing electrons for reduction during radical cofactor maturation in the catalytic small subunit RNR2. This Clavispora lusitaniae (strain ATCC 42720) (Yeast) protein is Fe-S cluster assembly protein DRE2.